The sequence spans 55 residues: Large ribosomal subunit protein bL33 (55 aa).

The protein belongs to the bacterial ribosomal protein bL33 family.

This is Large ribosomal subunit protein bL33 from Methylacidiphilum infernorum (isolate V4) (Methylokorus infernorum (strain V4)).